The following is a 185-amino-acid chain: Ribosome-recycling factor (185 aa).

Belongs to the RRF family.

The protein resides in the cytoplasm. Its function is as follows. Responsible for the release of ribosomes from messenger RNA at the termination of protein biosynthesis. May increase the efficiency of translation by recycling ribosomes from one round of translation to another. The chain is Ribosome-recycling factor from Aliivibrio salmonicida (strain LFI1238) (Vibrio salmonicida (strain LFI1238)).